We begin with the raw amino-acid sequence, 106 residues long: MPKVHVRKGDTVMVITGKDAGKKGKVVTVEPAKNRVIVEGVNIVKRHRKATPQMPQGGIVEKEAPIHSSNVMLFCNKCNKATRIQKKVLDNGNKERICKHCGETLS.

This sequence belongs to the universal ribosomal protein uL24 family. In terms of assembly, part of the 50S ribosomal subunit.

Functionally, one of two assembly initiator proteins, it binds directly to the 5'-end of the 23S rRNA, where it nucleates assembly of the 50S subunit. One of the proteins that surrounds the polypeptide exit tunnel on the outside of the subunit. This is Large ribosomal subunit protein uL24 from Desulforamulus reducens (strain ATCC BAA-1160 / DSM 100696 / MI-1) (Desulfotomaculum reducens).